We begin with the raw amino-acid sequence, 1286 residues long: MSTSFKEIRVSMATTEDIRRWSYGVVKKPETINYRTLKPEKDGLFGEQIFGPTRDWECGCGKYKRSRYRGVVCERCGVEVTQSSVRRERMGHIELAAPVTHIWYFKGVPSRLGYLLDIAPKDLDKVIYFAAYMVVSLDEEGRKEDLQDLENELRLDIKQLRDACDASIASAVSELERTITELQDAKTSASRINKVRSEAENKMANIRREYDDKIEHLERVWDSFKALKVGGLYAEDDVFRDVQDRYGDYFDACMGAEAIKRRLEDFDLQKTAQELGVQIVECRGQRKVRAIKRLRVVNSFITSKANPACMVLDVIPVIPPELRPMVQLDAGRFAASDLNDLYRRVINRNNRLKRLLDLGAPRIIVNNEKRMLQEAVDALFDNGRRGRPVSGTNNRTLKSLSDMLKGKSGRFRQNLLGKRVDYSGRSVIVVGPTLQLHQCGLPKLMALELFKPFIVKRLLDLALAPNIRSARRMIERGDPAVWDMLDAVIKARPVLLNRAPTLHRLGIQAFEPQLVEGKAIQLHPLVCAAFNADFDGDQMAVHLPLSLEAQAEARVLMLASNNILNPSDGRPVTLPSHDMIIGLYHLTTVKPSAKGAGRAFSSVAEAIMAKDRGDLSISAPVKILFSNIVLDGKTLDSAVVETTLGRAIFNEALPDGHPYINELVDKQVISSIINNLAEVYSKVEVANTLDKIKSVGFHWATRSGVTVAISDVVSPPEKQEIISKYETQARGVQQDFEIGLLTDLERRQALVSIWSEATDRVAEAMRKCFPDDNTINTMVTSGARGNWLQVRNIAGMRGLVANPKGETIPRPIISSYREGLSVTEYFISTHGARKGLVDTALKTADSGYLTRRLVDVAQDVVVRERDCGFTRGVRMPVTFRGDDGELHKVENAEHSVYGRTLAEDVKTPDDNLIAKAGEDISGIMIDSFIAAGVESVEVRSVLTCRSKVGVCSACYGRSLATGARVDIGDAVGIVAAQSIGEPGTQLTMRTFHSGGSASAVDITQGLPRVQELFEARTPRAAAPIAEADGTVSIEDGDRARRLILKSDNNEEFSYTVLKRAQLRVKDGSRVSLGDQLVEGSLDPKEVLRVKGIRAVQEYLVNGVQQVYRSQGVPIHNKHIEVIVRQMLRKVTVVDHGDTSMLPGELIDQSRYQELNREAQAEGRKTASARQEVTGITKASLATESWLSAASFQETTRVLTQAVISGRRDPLIGLKENVIIGNLIPAGTGLSVYRDVEPEPRPEAISRMYPTRRPEIENLLEGDSVDPEFDFSSLTQGLELPDDYPVQ.

Residues Cys58, Cys60, Cys73, and Cys76 each contribute to the Zn(2+) site. Residues Asp533, Asp535, and Asp537 each contribute to the Mg(2+) site. Residues Cys867, Cys944, Cys951, and Cys954 each contribute to the Zn(2+) site.

It belongs to the RNA polymerase beta' chain family. As to quaternary structure, the RNAP catalytic core consists of 2 alpha, 1 beta, 1 beta' and 1 omega subunit. When a sigma factor is associated with the core the holoenzyme is formed, which can initiate transcription. Mg(2+) serves as cofactor. Zn(2+) is required as a cofactor.

It carries out the reaction RNA(n) + a ribonucleoside 5'-triphosphate = RNA(n+1) + diphosphate. DNA-dependent RNA polymerase catalyzes the transcription of DNA into RNA using the four ribonucleoside triphosphates as substrates. The protein is DNA-directed RNA polymerase subunit beta' of Tropheryma whipplei (strain TW08/27) (Whipple's bacillus).